Reading from the N-terminus, the 494-residue chain is Glutamyl-tRNA(Gln) amidotransferase subunit A (494 aa).

Residues Lys-79 and Ser-159 each act as charge relay system in the active site. Catalysis depends on Ser-183, which acts as the Acyl-ester intermediate.

Belongs to the amidase family. GatA subfamily. Heterotrimer of A, B and C subunits.

The enzyme catalyses L-glutamyl-tRNA(Gln) + L-glutamine + ATP + H2O = L-glutaminyl-tRNA(Gln) + L-glutamate + ADP + phosphate + H(+). Its function is as follows. Allows the formation of correctly charged Gln-tRNA(Gln) through the transamidation of misacylated Glu-tRNA(Gln) in organisms which lack glutaminyl-tRNA synthetase. The reaction takes place in the presence of glutamine and ATP through an activated gamma-phospho-Glu-tRNA(Gln). The polypeptide is Glutamyl-tRNA(Gln) amidotransferase subunit A (Bartonella henselae (strain ATCC 49882 / DSM 28221 / CCUG 30454 / Houston 1) (Rochalimaea henselae)).